The sequence spans 310 residues: Porphobilinogen deaminase (310 aa).

Cys236 is subject to S-(dipyrrolylmethanemethyl)cysteine.

It belongs to the HMBS family. Monomer. The cofactor is dipyrromethane.

It carries out the reaction 4 porphobilinogen + H2O = hydroxymethylbilane + 4 NH4(+). It participates in porphyrin-containing compound metabolism; protoporphyrin-IX biosynthesis; coproporphyrinogen-III from 5-aminolevulinate: step 2/4. In terms of biological role, tetrapolymerization of the monopyrrole PBG into the hydroxymethylbilane pre-uroporphyrinogen in several discrete steps. The polypeptide is Porphobilinogen deaminase (Nitratiruptor sp. (strain SB155-2)).